A 316-amino-acid chain; its full sequence is Ribosomal RNA small subunit methyltransferase H (316 aa).

Residues 35 to 37, D55, F79, D101, and Q108 contribute to the S-adenosyl-L-methionine site; that span reads GGH.

Belongs to the methyltransferase superfamily. RsmH family.

The protein resides in the cytoplasm. The catalysed reaction is cytidine(1402) in 16S rRNA + S-adenosyl-L-methionine = N(4)-methylcytidine(1402) in 16S rRNA + S-adenosyl-L-homocysteine + H(+). Specifically methylates the N4 position of cytidine in position 1402 (C1402) of 16S rRNA. The chain is Ribosomal RNA small subunit methyltransferase H from Vibrio campbellii (strain ATCC BAA-1116).